Here is a 374-residue protein sequence, read N- to C-terminus: Proteinase-activated receptor 3 (374 aa).

Positions 1 to 21 (MKALIFAAAGLLLLLPTFCQS) are cleaved as a signal peptide. A propeptide spans 22–38 (GMENDTNNLAKPTLPIK) (removed for receptor activation). N-linked (GlcNAc...) asparagine glycans are attached at residues Asn-25 and Asn-82. Over 39–94 (TFRGAPPNSFEEFPFSALEGWTGATITVKIKCPEESASHLHVKNATMGYLTSSLST) the chain is Extracellular. The chain crosses the membrane as a helical span at residues 95-120 (KLIPAIYLLVFVVGVPANAVTLWMLF). Topologically, residues 121–128 (FRTRSICT) are cytoplasmic. A helical transmembrane segment spans residues 129–148 (TVFYTNLAIADFLFCVTLPF). Residues 149 to 167 (KIAYHLNGNNWVFGEVLCR) are Extracellular-facing. Cys-166 and Cys-245 are joined by a disulfide. The chain crosses the membrane as a helical span at residues 168–189 (ATTVIFYGNMYCSILLLACISI). At 190 to 206 (NRYLAIVHPFTYRGLPK) the chain is on the cytoplasmic side. The helical transmembrane segment at 207–230 (HTYALVTCGLVWATVFLYMLPFFI) threads the bilayer. Over 231 to 260 (LKQEYYLVQPDITTCHDVHNTCESSSPFQL) the chain is Extracellular. A helical membrane pass occupies residues 261–280 (YYFISLAFFGFLIPFVLIIY). Over 281-297 (CYAAIIRTLNAYDHRWL) the chain is Cytoplasmic. A helical membrane pass occupies residues 298-322 (WYVKASLLILVIFTICFAPSNIILI). Topologically, residues 323–336 (IHHANYYYNNTDGL) are extracellular. Asn-331 carries an N-linked (GlcNAc...) asparagine glycan. Residues 337–361 (YFIYLIALCLGSLNSCLDPFLYFLM) form a helical membrane-spanning segment. Residues 362-374 (SKTRNHSTAYLTK) are Cytoplasmic-facing.

Belongs to the G-protein coupled receptor 1 family. As to quaternary structure, interacts with INSC/inscuteable and probably GPSM2. In terms of processing, a proteolytic cleavage generates a new N-terminus that functions as a tethered ligand. As to expression, highest expression in the megakaryocytes of the bone marrow, lower in mature megakaryocytes, in platelets and in a variety of other tissues such as heart and gut.

It localises to the cell membrane. Functionally, receptor for activated thrombin coupled to G proteins that stimulate phosphoinositide hydrolysis. The chain is Proteinase-activated receptor 3 (F2RL2) from Homo sapiens (Human).